Consider the following 161-residue polypeptide: Cyclic pyranopterin monophosphate synthase (161 aa).

Substrate contacts are provided by residues L75–H77 and M113–E114. D128 is an active-site residue.

This sequence belongs to the MoaC family. Homohexamer; trimer of dimers.

The catalysed reaction is (8S)-3',8-cyclo-7,8-dihydroguanosine 5'-triphosphate = cyclic pyranopterin phosphate + diphosphate. The protein operates within cofactor biosynthesis; molybdopterin biosynthesis. Functionally, catalyzes the conversion of (8S)-3',8-cyclo-7,8-dihydroguanosine 5'-triphosphate to cyclic pyranopterin monophosphate (cPMP). This chain is Cyclic pyranopterin monophosphate synthase, found in Citrobacter koseri (strain ATCC BAA-895 / CDC 4225-83 / SGSC4696).